A 361-amino-acid chain; its full sequence is Tetrathionate reductase subunit C (361 aa).

9 helical membrane passes run phenylalanine 26–leucine 46, alanine 53–leucine 73, alanine 104–leucine 124, leucine 160–phenylalanine 180, leucine 193–leucine 213, glycine 233–tryptophan 253, phenylalanine 258–leucine 278, isoleucine 288–isoleucine 308, and alanine 334–methionine 354.

It belongs to the NrfD family. Probably composed of three subunits: TtrA, TtrB and TtrC.

It is found in the cell membrane. Functionally, part of a membrane-bound tetrathionate reductase that catalyzes the reduction of tetrathionate to thiosulfate. TtrC probably anchors TtrA and TtrB to the external face of the cytoplasmic membrane. May transfer electrons from membrane quinol to TtrB. In Archaeoglobus fulgidus (strain ATCC 49558 / DSM 4304 / JCM 9628 / NBRC 100126 / VC-16), this protein is Tetrathionate reductase subunit C (ttrC).